A 272-amino-acid chain; its full sequence is Shikimate dehydrogenase (NADP(+)) (272 aa).

Residues 14–16 and Thr61 contribute to the shikimate site; that span reads SRS. Lys65 serves as the catalytic Proton acceptor. Glu77 is an NADP(+) binding site. Residues Asn86 and Asp102 each contribute to the shikimate site. Residues 126–130, 149–154, and Met213 contribute to the NADP(+) site; these read GVGGA and NRTFPR. Tyr215 contacts shikimate. An NADP(+)-binding site is contributed by Gly237.

The protein belongs to the shikimate dehydrogenase family. As to quaternary structure, homodimer.

It catalyses the reaction shikimate + NADP(+) = 3-dehydroshikimate + NADPH + H(+). Its pathway is metabolic intermediate biosynthesis; chorismate biosynthesis; chorismate from D-erythrose 4-phosphate and phosphoenolpyruvate: step 4/7. In terms of biological role, involved in the biosynthesis of the chorismate, which leads to the biosynthesis of aromatic amino acids. Catalyzes the reversible NADPH linked reduction of 3-dehydroshikimate (DHSA) to yield shikimate (SA). In Sodalis glossinidius (strain morsitans), this protein is Shikimate dehydrogenase (NADP(+)).